Consider the following 92-residue polypeptide: Small ribosomal subunit protein uS19c (92 aa).

The protein belongs to the universal ribosomal protein uS19 family.

The protein resides in the plastid. The protein localises to the chloroplast. Functionally, protein S19 forms a complex with S13 that binds strongly to the 16S ribosomal RNA. This chain is Small ribosomal subunit protein uS19c, found in Gracilaria tenuistipitata var. liui (Red alga).